A 131-amino-acid polypeptide reads, in one-letter code: uncharacterized protein (131 aa).

This is an uncharacterized protein from Orgyia pseudotsugata multicapsid polyhedrosis virus (OpMNPV).